The following is a 130-amino-acid chain: Small ribosomal subunit protein uS9 (130 aa).

This sequence belongs to the universal ribosomal protein uS9 family.

The sequence is that of Small ribosomal subunit protein uS9 from Colwellia psychrerythraea (strain 34H / ATCC BAA-681) (Vibrio psychroerythus).